A 315-amino-acid chain; its full sequence is 7,8-didemethyl-8-hydroxy-5-deazariboflavin synthase (315 aa).

Positions 6 to 237 constitute a Radical SAM core domain; sequence ITYSPAFTLV…EDITIQIPAN (232 aa). The [4Fe-4S] cluster site is built by cysteine 20, cysteine 24, and cysteine 27.

It belongs to the radical SAM superfamily. CofG family. As to quaternary structure, consists of two subunits, CofG and CofH. Requires [4Fe-4S] cluster as cofactor.

The catalysed reaction is 5-amino-5-(4-hydroxybenzyl)-6-(D-ribitylimino)-5,6-dihydrouracil + S-adenosyl-L-methionine = 7,8-didemethyl-8-hydroxy-5-deazariboflavin + 5'-deoxyadenosine + L-methionine + NH4(+) + H(+). The protein operates within cofactor biosynthesis; coenzyme F0 biosynthesis. Catalyzes the radical-mediated synthesis of 7,8-didemethyl-8-hydroxy-5-deazariboflavin from 5-amino-5-(4-hydroxybenzyl)-6-(D-ribitylimino)-5,6-dihydrouracil. The protein is 7,8-didemethyl-8-hydroxy-5-deazariboflavin synthase of Thermosynechococcus vestitus (strain NIES-2133 / IAM M-273 / BP-1).